The primary structure comprises 275 residues: uncharacterized protein (275 aa).

Residues 20-22 (RAQ), 41-42 (DI), 80-81 (DI), and asparagine 107 contribute to the NAD(+) site. Position 160 (serine 160) interacts with substrate. The active-site Proton acceptor is the tyrosine 173. Residues lysine 177 and 206 to 208 (VDT) each bind NAD(+).

The protein belongs to the short-chain dehydrogenases/reductases (SDR) family.

This is an uncharacterized protein from Mycobacterium tuberculosis (strain CDC 1551 / Oshkosh).